A 393-amino-acid chain; its full sequence is tRNA(Met) cytidine acetate ligase (393 aa).

Residues Gly-81, Asn-142, and Arg-167 each coordinate ATP.

Belongs to the TmcAL family.

It is found in the cytoplasm. The enzyme catalyses cytidine(34) in elongator tRNA(Met) + acetate + ATP = N(4)-acetylcytidine(34) in elongator tRNA(Met) + AMP + diphosphate. Catalyzes the formation of N(4)-acetylcytidine (ac(4)C) at the wobble position of elongator tRNA(Met), using acetate and ATP as substrates. First activates an acetate ion to form acetyladenylate (Ac-AMP) and then transfers the acetyl group to tRNA to form ac(4)C34. The protein is tRNA(Met) cytidine acetate ligase of Bacillus anthracis (strain A0248).